A 302-amino-acid polypeptide reads, in one-letter code: tRNA pseudouridine synthase B (302 aa).

Asp-40 serves as the catalytic Nucleophile.

The protein belongs to the pseudouridine synthase TruB family. Type 1 subfamily.

It catalyses the reaction uridine(55) in tRNA = pseudouridine(55) in tRNA. Functionally, responsible for synthesis of pseudouridine from uracil-55 in the psi GC loop of transfer RNAs. This Shouchella clausii (strain KSM-K16) (Alkalihalobacillus clausii) protein is tRNA pseudouridine synthase B.